We begin with the raw amino-acid sequence, 477 residues long: Bifunctional protein HldE (477 aa).

The segment at methionine 1–threonine 321 is ribokinase. ATP is bound at residue asparagine 198–glutamate 201. Residue aspartate 266 is part of the active site. Residues phenylalanine 348–valine 477 form a cytidylyltransferase region.

In the N-terminal section; belongs to the carbohydrate kinase PfkB family. The protein in the C-terminal section; belongs to the cytidylyltransferase family. Homodimer.

The catalysed reaction is D-glycero-beta-D-manno-heptose 7-phosphate + ATP = D-glycero-beta-D-manno-heptose 1,7-bisphosphate + ADP + H(+). It carries out the reaction D-glycero-beta-D-manno-heptose 1-phosphate + ATP + H(+) = ADP-D-glycero-beta-D-manno-heptose + diphosphate. The protein operates within nucleotide-sugar biosynthesis; ADP-L-glycero-beta-D-manno-heptose biosynthesis; ADP-L-glycero-beta-D-manno-heptose from D-glycero-beta-D-manno-heptose 7-phosphate: step 1/4. It functions in the pathway nucleotide-sugar biosynthesis; ADP-L-glycero-beta-D-manno-heptose biosynthesis; ADP-L-glycero-beta-D-manno-heptose from D-glycero-beta-D-manno-heptose 7-phosphate: step 3/4. In terms of biological role, catalyzes the phosphorylation of D-glycero-D-manno-heptose 7-phosphate at the C-1 position to selectively form D-glycero-beta-D-manno-heptose-1,7-bisphosphate. Its function is as follows. Catalyzes the ADP transfer from ATP to D-glycero-beta-D-manno-heptose 1-phosphate, yielding ADP-D-glycero-beta-D-manno-heptose. The sequence is that of Bifunctional protein HldE from Sulfurimonas denitrificans (strain ATCC 33889 / DSM 1251) (Thiomicrospira denitrificans (strain ATCC 33889 / DSM 1251)).